We begin with the raw amino-acid sequence, 156 residues long: MPRKGHTQKRDVLADPIYNNKVVTKLINNIMLDGKRGVAQKIVYGAFDRVAAKTERPAIEVFEEAMNNIMPVLEVKARRIGGATYQVPIEVKPDRRQALALRWMTTFSRARGEKTMEERLANEILDAANNTGASVKRKEDMHKMAEANKAFAHYRF.

The protein belongs to the universal ribosomal protein uS7 family. In terms of assembly, part of the 30S ribosomal subunit. Contacts proteins S9 and S11.

In terms of biological role, one of the primary rRNA binding proteins, it binds directly to 16S rRNA where it nucleates assembly of the head domain of the 30S subunit. Is located at the subunit interface close to the decoding center, probably blocks exit of the E-site tRNA. This Lachnospira eligens (strain ATCC 27750 / DSM 3376 / VPI C15-48 / C15-B4) (Eubacterium eligens) protein is Small ribosomal subunit protein uS7.